We begin with the raw amino-acid sequence, 238 residues long: MVIVLASANQHKICEFQAMLKNVKEKVKVYAYGELLETFEIAENGNSFKENATLKVKAIYQALYTLSQSTMQENIRNLFAQPLAIIAEDSGLCVPVLNGEPGIYSARYAHHKQFASMQYKNTDEANLYCLLNALTHCAPTPAFFVAHIALIFIKPYFCTYTLPPLEQCVIEHFEGILNGEVINEMRGNEGFGYDPLFIPAEHNPQSLTLAEFDMSAKNTISHRKKALSQCINRLFDKS.

7–12 (SANQHK) contacts substrate. The active-site Proton acceptor is the D89. D89 is a Mg(2+) binding site. Residues S90, 191–194 (FGYD), K217, and 222–223 (HR) each bind substrate.

Belongs to the HAM1 NTPase family. As to quaternary structure, homodimer. Mg(2+) serves as cofactor.

It catalyses the reaction XTP + H2O = XMP + diphosphate + H(+). It carries out the reaction dITP + H2O = dIMP + diphosphate + H(+). The catalysed reaction is ITP + H2O = IMP + diphosphate + H(+). In terms of biological role, pyrophosphatase that catalyzes the hydrolysis of nucleoside triphosphates to their monophosphate derivatives, with a high preference for the non-canonical purine nucleotides XTP (xanthosine triphosphate), dITP (deoxyinosine triphosphate) and ITP. Seems to function as a house-cleaning enzyme that removes non-canonical purine nucleotides from the nucleotide pool, thus preventing their incorporation into DNA/RNA and avoiding chromosomal lesions. The polypeptide is dITP/XTP pyrophosphatase (Helicobacter hepaticus (strain ATCC 51449 / 3B1)).